A 211-amino-acid chain; its full sequence is Uracil phosphoribosyltransferase (211 aa).

5-phospho-alpha-D-ribose 1-diphosphate-binding positions include Arg77, Arg102, and 129–137; that span reads DPMLATGGS. Residues Ile192 and 197 to 199 each bind uracil; that span reads GDA. Asp198 contacts 5-phospho-alpha-D-ribose 1-diphosphate.

Belongs to the UPRTase family. It depends on Mg(2+) as a cofactor.

It carries out the reaction UMP + diphosphate = 5-phospho-alpha-D-ribose 1-diphosphate + uracil. It functions in the pathway pyrimidine metabolism; UMP biosynthesis via salvage pathway; UMP from uracil: step 1/1. Its activity is regulated as follows. Allosterically activated by GTP. Catalyzes the conversion of uracil and 5-phospho-alpha-D-ribose 1-diphosphate (PRPP) to UMP and diphosphate. In Corynebacterium aurimucosum (strain ATCC 700975 / DSM 44827 / CIP 107346 / CN-1) (Corynebacterium nigricans), this protein is Uracil phosphoribosyltransferase.